The primary structure comprises 351 residues: UDP-glucose 4-epimerase 5 (351 aa).

NAD(+)-binding positions include Gly-13 to Ile-15, Asp-34 to Asn-38, Asp-64 to Leu-65, Phe-86, and Lys-90. Residue Ser-130 to Thr-132 participates in substrate binding. The active-site Proton acceptor is Tyr-154. 2 residues coordinate NAD(+): Lys-158 and Tyr-182. Residues Tyr-182–Asn-184, Asn-203–Leu-205, Thr-221–Phe-223, Arg-236, and Arg-298–Asp-301 each bind substrate.

This sequence belongs to the NAD(P)-dependent epimerase/dehydratase family. As to quaternary structure, forms homodimers and heterodimers. It depends on NAD(+) as a cofactor. As to expression, widely expressed.

It carries out the reaction UDP-alpha-D-glucose = UDP-alpha-D-galactose. It functions in the pathway carbohydrate metabolism; galactose metabolism. Enhanced activity by NaCl. Inhibited by UDP. Catalyzes the interconversion between UDP-glucose and UDP-galactose. This Arabidopsis thaliana (Mouse-ear cress) protein is UDP-glucose 4-epimerase 5.